Reading from the N-terminus, the 241-residue chain is Tetraspanin-1 (241 aa).

Over 1–11 (MQCFSFIKTMM) the chain is Cytoplasmic. A helical membrane pass occupies residues 12–34 (ILFNLLIFLCGAALLAVGIWVSI). The Extracellular segment spans residues 35–53 (DGASFLKIFGPLSSSAMQF). The helical transmembrane segment at 54 to 76 (VNVGYFLIAAGVVVFALGFLGCY) threads the bilayer. At 77 to 88 (GAKTESKCALMT) the chain is on the cytoplasmic side. Residues 89–111 (FFFILLLIFIAEVAAAVVALVYT) traverse the membrane as a helical segment. Residues 112-214 (TMAEHFLTLL…LYDIRTNAVT (103 aa)) lie on the Extracellular side of the membrane. 4 N-linked (GlcNAc...) asparagine glycosylation sites follow: Asn141, Asn154, Asn178, and Asn184. The helical transmembrane segment at 215–237 (VGGVAAGIGGLELAAMIVSMYLY) threads the bilayer. Residues 238–241 (CNLQ) lie on the Cytoplasmic side of the membrane.

It belongs to the tetraspanin (TM4SF) family. Interacts with SLC19A2. Interacts with NTRK1/TRKA.

Its subcellular location is the lysosome membrane. Its function is as follows. Structural component of specialized membrane microdomains known as tetraspanin-enriched microdomains (TERMs), which act as platforms for receptor clustering and signaling. Participates thereby in diverse biological functions such as cell signal transduction, adhesion, migration and protein trafficking. Regulates neuronal differentiation in response to NGF by facilitating NGF-mediated activation of NTRK1/TRKA receptor tyrosine kinase and subsequent downstream signaling pathways. Plays a role in the inhibition of TNFalpha-induced apoptosis. Mechanistically, inhibits the NF-kappa-B signaling pathway by blocking phosphorylation of CHUK. Also promotes the stability of the thiamine transporter 1/SLC19A2 in intestinal epithelial cells leading to an increase of thiamine uptake process. This chain is Tetraspanin-1 (TSPAN1), found in Pongo abelii (Sumatran orangutan).